Consider the following 258-residue polypeptide: Tryptophan synthase alpha chain (258 aa).

Catalysis depends on proton acceptor residues Glu-52 and Asp-63.

It belongs to the TrpA family. As to quaternary structure, tetramer of two alpha and two beta chains.

The enzyme catalyses (1S,2R)-1-C-(indol-3-yl)glycerol 3-phosphate + L-serine = D-glyceraldehyde 3-phosphate + L-tryptophan + H2O. Its pathway is amino-acid biosynthesis; L-tryptophan biosynthesis; L-tryptophan from chorismate: step 5/5. Its function is as follows. The alpha subunit is responsible for the aldol cleavage of indoleglycerol phosphate to indole and glyceraldehyde 3-phosphate. This chain is Tryptophan synthase alpha chain, found in Streptococcus pneumoniae (strain ATCC 700669 / Spain 23F-1).